A 186-amino-acid polypeptide reads, in one-letter code: Large ribosomal subunit protein uL22 (186 aa).

The segment at 159–186 (KATDEEPTKKKLSKKKLQRQKEKMMRSE) is disordered. A compositionally biased stretch (basic and acidic residues) spans 177-186 (RQKEKMMRSE).

It belongs to the universal ribosomal protein uL22 family.

The chain is Large ribosomal subunit protein uL22 (RpL17) from Phlebotomus papatasi (Sandfly).